We begin with the raw amino-acid sequence, 499 residues long: Protein NODULATION SIGNALING PATHWAY 2 (499 aa).

A disordered region spans residues 64 to 106; it reads NNTGPAFSDHTASTTSEEEEEEEATTTTMTTTTTTTTTTPEAA. The segment covering 88 to 104 has biased composition (low complexity); that stretch reads TTTTMTTTTTTTTTTPE. The GRAS domain occupies 106–491; it reads ADDDFKGLRL…RRLLSASLWT (386 aa). The interval 113-182 is leucine repeat I (LRI); it reads LRLVHLLMAG…AGGAYNSSSK (70 aa). The segment at 201–265 is VHIID; that stretch reads FQLLQDMSPY…PNGPHLRITA (65 aa). The short motif at 232–236 is the VHIID element; the sequence is VHIVD. The segment at 281 to 313 is leucine repeat II (LRII); that stretch reads ETGRRLTAFATSLGQPFSFHHSRLESDETFRPA. The interval 323-414 is PFYRE; it reads LVFNCMLNLP…RVFLGPRIVG (92 aa). The tract at residues 417-491 is SAW; sequence ARIYRTGGGG…RRLLSASLWT (75 aa).

The protein belongs to the GRAS family. In terms of assembly, interacts with IPN2. Binds to RAD1. Interacts with RAM1. Highly expressed in roots.

It localises to the nucleus membrane. The protein resides in the endoplasmic reticulum. Functionally, transcriptional regulator essential for Nod-factor-induced gene expression. Acts downstream of calcium spiking and a calcium/calmodulin-dependent protein kinase required for activation of early nodulation gene expression. Transcription factor involved in the induction of NIN and ENOD40 genes, which are required for rhizobial infection and early nodule development. Does not seem to contribute to the early steps of the arbuscular mycorrhizal fungus infection and colonization processes in roots. Transcription factor involved in the positive regulation of the beta-carotene isomerase D27, which participates in a pathway leading to biosynthesis of strigolactones in roots. This is Protein NODULATION SIGNALING PATHWAY 2 from Lotus japonicus (Lotus corniculatus var. japonicus).